Reading from the N-terminus, the 52-residue chain is Large ribosomal subunit protein eL39 (52 aa).

Belongs to the eukaryotic ribosomal protein eL39 family.

The chain is Large ribosomal subunit protein eL39 from Caldivirga maquilingensis (strain ATCC 700844 / DSM 13496 / JCM 10307 / IC-167).